The chain runs to 264 residues: Glutamate racemase (264 aa).

Residues 10-11 (DS) and 42-43 (YG) each bind substrate. C73 (proton donor/acceptor) is an active-site residue. 74-75 (NT) serves as a coordination point for substrate. C183 serves as the catalytic Proton donor/acceptor. 184–185 (TH) contacts substrate.

It belongs to the aspartate/glutamate racemases family.

It catalyses the reaction L-glutamate = D-glutamate. It participates in cell wall biogenesis; peptidoglycan biosynthesis. Provides the (R)-glutamate required for cell wall biosynthesis. The polypeptide is Glutamate racemase (Streptococcus agalactiae serotype Ia (strain ATCC 27591 / A909 / CDC SS700)).